A 306-amino-acid polypeptide reads, in one-letter code: Pre-mRNA-splicing factor cwf26 (306 aa).

The disordered stretch occupies residues 130–152 (KAEERRKREEKSSNLDEEELRKS). Residues 130–198 (KAEERRKREE…KEQQQGVVQV (69 aa)) adopt a coiled-coil conformation.

This sequence belongs to the CWC26 family. Belongs to the 40S cdc5-associated complex (or cwf complex), a spliceosome sub-complex reminiscent of a late-stage spliceosome composed of the U2, U5 and U6 snRNAs and at least brr2, cdc5, cwf2/prp3, cwf3/syf1, cwf4/syf3, cwf5/ecm2, spp42/cwf6, cwf7/spf27, cwf8, cwf9, cwf10, cwf11, cwf12, prp45/cwf13, cwf14, cwf15, cwf16, cwf17, cwf18, cwf19, cwf20, cwf21, cwf22, cwf23, cwf24, cwf25, cwf26, cyp7/cwf27, cwf28, cwf29/ist3, lea1, msl1, prp5/cwf1, prp10, prp12/sap130, prp17, prp22, sap61, sap62, sap114, sap145, slu7, smb1, smd1, smd3, smf1, smg1 and syf2.

The protein resides in the cytoplasm. Its subcellular location is the nucleus. Involved in mRNA splicing. The sequence is that of Pre-mRNA-splicing factor cwf26 (cwf26) from Schizosaccharomyces pombe (strain 972 / ATCC 24843) (Fission yeast).